We begin with the raw amino-acid sequence, 711 residues long: MKSLILAEKPSVARDIAEAMNIKGKRNGYIENEKYVVTWALGHLVTNAQPEHYDKAYKEWKLEDLPIIPKRMQTVVIGKTSKQFKTVKSLILDKKVKEVIIATDAGREGELVARLILDKVHNKKPIKRLWISSVTKKAIQEGFKKLKDGREFQHLYEAALARSEADWIVGINATRALTTKYDAQLSLGRVQTPTIQLVNARQQEINHFKAKKYYTLSTEIGGLTFQLSTNKQHMTMEDATQIANEIKHVEGNVDSVEKKVKKSHPKPLYNLTDLQQEAYQRYKMGPKETLNTIQNLYERHKVLTYPRTDSNYLTDDMVDTIKERLYALLATDYKSQVKSLLGQSYSSKMRIFKNHKVSDHHAIIPTEVRPDMQSLSNRESKIYMMVAERFLESLMAPHEYEAVRVNVTVGQHIFAFNEKVTRQLGYKALKMNNDNVVKKVAFQKGEKYHLQSLKVNEHETTPPDYFNEGSLLKAMENPQNYIQLKEKKHANTLRQTGGIGTVATRADIIEKLFNLNAIESRDGKIKVTSKGKQILDLAPQELTSPLLTAEWEEKLLLIEKGRYNSRHFIDEMKAFTQSIVNTIKNSEQKYKHDNLTTTECPTCGKFMIKVKTKNGQMLVCQDPTCKTKKNVQRKTNARCPNCKKKMTLFGRGKDAVYRCVCGHTETQEQMDKRFKNKSSGKVSKKEMKKYMNNEDSLENNPFKDALKNLKL.

Positions 2-135 (KSLILAEKPS…IKRLWISSVT (134 aa)) constitute a Toprim domain. Glu8 and Asp104 together coordinate Mg(2+). The 429-residue stretch at 152-580 (FQHLYEAALA…EMKAFTQSIV (429 aa)) folds into the Topo IA-type catalytic domain. Residues 186-191 (SLGRVQ) form an interaction with DNA region. Tyr305 serves as the catalytic O-(5'-phospho-DNA)-tyrosine intermediate. The segment at 672–699 (KRFKNKSSGKVSKKEMKKYMNNEDSLEN) is disordered. Positions 683-692 (SKKEMKKYMN) are enriched in basic and acidic residues.

This sequence belongs to the type IA topoisomerase family. Requires Mg(2+) as cofactor.

The catalysed reaction is ATP-independent breakage of single-stranded DNA, followed by passage and rejoining.. Its function is as follows. Releases the supercoiling and torsional tension of DNA, which is introduced during the DNA replication and transcription, by transiently cleaving and rejoining one strand of the DNA duplex. Introduces a single-strand break via transesterification at a target site in duplex DNA. The scissile phosphodiester is attacked by the catalytic tyrosine of the enzyme, resulting in the formation of a DNA-(5'-phosphotyrosyl)-enzyme intermediate and the expulsion of a 3'-OH DNA strand. The free DNA strand then undergoes passage around the unbroken strand, thus removing DNA supercoils. Finally, in the religation step, the DNA 3'-OH attacks the covalent intermediate to expel the active-site tyrosine and restore the DNA phosphodiester backbone. This is DNA topoisomerase 3 from Staphylococcus haemolyticus (strain JCSC1435).